The chain runs to 593 residues: NADH-quinone oxidoreductase subunit C/D (593 aa).

The NADH dehydrogenase I subunit C stretch occupies residues 1–184 (MTTGSALYIP…DPFSLNLAKQ (184 aa)). Residues 208–593 (DYMFLNLGPN…IDFVMADVDR (386 aa)) are NADH dehydrogenase I subunit D.

It in the N-terminal section; belongs to the complex I 30 kDa subunit family. In the C-terminal section; belongs to the complex I 49 kDa subunit family. NDH-1 is composed of 13 different subunits. Subunits NuoB, CD, E, F, and G constitute the peripheral sector of the complex.

It localises to the cell inner membrane. The catalysed reaction is a quinone + NADH + 5 H(+)(in) = a quinol + NAD(+) + 4 H(+)(out). Functionally, NDH-1 shuttles electrons from NADH, via FMN and iron-sulfur (Fe-S) centers, to quinones in the respiratory chain. The immediate electron acceptor for the enzyme in this species is believed to be ubiquinone. Couples the redox reaction to proton translocation (for every two electrons transferred, four hydrogen ions are translocated across the cytoplasmic membrane), and thus conserves the redox energy in a proton gradient. The protein is NADH-quinone oxidoreductase subunit C/D of Pseudomonas fluorescens (strain ATCC BAA-477 / NRRL B-23932 / Pf-5).